A 56-amino-acid polypeptide reads, in one-letter code: Ribosome modulation factor (56 aa).

This sequence belongs to the ribosome modulation factor family.

Its subcellular location is the cytoplasm. In terms of biological role, during stationary phase, converts 70S ribosomes to an inactive dimeric form (100S ribosomes). This Serratia proteamaculans (strain 568) protein is Ribosome modulation factor.